The following is a 329-amino-acid chain: GTPase Obg (329 aa).

The Obg domain occupies 1–159 (MQFIDQAIID…WSLQLELKLL (159 aa)). Residues 160–328 (AEVGIIGLPN…LLSSIWYELG (169 aa)) form the OBG-type G domain. ATP contacts are provided by residues 166 to 173 (GLPNAGKS), 191 to 195 (FTTLI), 213 to 216 (DIPG), 280 to 283 (NKKE), and 309 to 311 (SAV). Mg(2+)-binding residues include Ser-173 and Thr-193.

Belongs to the TRAFAC class OBG-HflX-like GTPase superfamily. OBG GTPase family. Monomer. It depends on Mg(2+) as a cofactor.

It localises to the cytoplasm. An essential GTPase which binds GTP, GDP and possibly (p)ppGpp with moderate affinity, with high nucleotide exchange rates and a fairly low GTP hydrolysis rate. Plays a role in control of the cell cycle, stress response, ribosome biogenesis and in those bacteria that undergo differentiation, in morphogenesis control. This chain is GTPase Obg, found in Prochlorococcus marinus (strain NATL1A).